The chain runs to 810 residues: MTTLKLDTLSDRIKAHKNALVHIVKPPVCTERAQHYTEMYQQHLDKPIPVRRALALAHHLANRTIWIKHDELIIGNQASEVRAAPIFPEYTVSWIEKEIDDLADRPGAGFAVSEENKRVLHEVCPWWRGQTVQDRCYGMFTDEQKGLLATGIIKAEGNMTSGDAHLAVNFPLLLEKGLDGLREEVAERRSRINLTVLEDLHGEQFLKAIDIVLVAVSEHIERFAALAREMAATETRESRRDELLAMAENCDLIAHQPPQTFWQALQLCYFIQLILQIESNGHSVSFGRMDQYLYPYYRRDVELNQTLDREHAIEMLHSCWLKLLEVNKIRSGSHSKASAGSPLYQNVTIGGQNLVDGQPMDAVNPLSYAILESCGRLRSTQPNLSVRYHAGMSNDFLDACVQVIRCGFGMPAFNNDEIVIPEFIKLGIEPQDAYDYAAIGCIETAVGGKWGYRCTGMSFINFARVMLAALEGGHDATSGKVFLPQEKALSAGNFNNFDEVMDAWDTQIRYYTRKSIEIEYVVDTMLEENVHDILCSALVDDCIERAKSIKQGGAKYDWVSGLQVGIANLGNSLAAVKKLVFEQGAIGQQQLAAALADDFDGLTHEQLRQRLINGAPKYGNDDDTVDTLLARAYQTYIDELKQYHNPRYGRGPVGGNYYAGTSSISANVPFGAQTMATPDGRKAHTPLAEGASPASGTDHLGPTAVIGSVGKLPTAAILGGVLLNQKLNPATLENESDKQKLMILLRTFFEVHKGWHIQYNIVSRETLLDAKKHPDQYRDLVVRVAGYSAFFTALSPDAQDDIIARTEHML.

The 672-residue stretch at 11–682 folds into the PFL domain; it reads DRIKAHKNAL…QTMATPDGRK (672 aa). The interval 677 to 699 is disordered; the sequence is TPDGRKAHTPLAEGASPASGTDH. The 122-residue stretch at 689–810 folds into the Glycine radical domain; it reads EGASPASGTD…DIIARTEHML (122 aa). Glycine 786 is modified (glycine radical).

Belongs to the glycyl radical enzyme (GRE) family.

In terms of biological role, probably shows dehydratase activity. This Escherichia coli (strain K12) protein is Probable dehydratase YbiW (ybiW).